Here is a 122-residue protein sequence, read N- to C-terminus: UPF0102 protein ECH_0093 (122 aa).

This sequence belongs to the UPF0102 family.

The protein is UPF0102 protein ECH_0093 of Ehrlichia chaffeensis (strain ATCC CRL-10679 / Arkansas).